We begin with the raw amino-acid sequence, 221 residues long: ATP-dependent Clp protease proteolytic subunit 1, mitochondrial (221 aa).

The N-terminal 25 residues, 1-25 (MLRRLVTSSLSASRSMSASVQSRVG), are a transit peptide targeting the mitochondrion. The active-site Nucleophile is the Ser-120. His-145 is an active-site residue.

It belongs to the peptidase S14 family. In terms of assembly, tetradecamer that assembles into a two heptameric rings with a central cavity. As to expression, expressed in the intestine.

The protein localises to the mitochondrion matrix. The catalysed reaction is Hydrolysis of proteins to small peptides in the presence of ATP and magnesium. alpha-casein is the usual test substrate. In the absence of ATP, only oligopeptides shorter than five residues are hydrolyzed (such as succinyl-Leu-Tyr-|-NHMec, and Leu-Tyr-Leu-|-Tyr-Trp, in which cleavage of the -Tyr-|-Leu- and -Tyr-|-Trp bonds also occurs).. Clp cleaves peptides in various proteins in a process that requires ATP hydrolysis. Clp may be responsible for a fairly general and central housekeeping function rather than for the degradation of specific substrates. The polypeptide is ATP-dependent Clp protease proteolytic subunit 1, mitochondrial (clpp-1) (Caenorhabditis elegans).